Here is an 87-residue protein sequence, read N- to C-terminus: Bombyxin B-10 (87 aa).

Positions 1–19 (MKTILIFLVVISLMYSGEA) are cleaved as a signal peptide. 3 disulfide bridges follow: C27–C73, C39–C86, and C72–C77. The propeptide at 46-64 (SGAQYAPYFWTRQYLGSRG) is bombyxin B-10 C peptide.

Belongs to the insulin family. As to quaternary structure, heterodimer of a B chain and an A chain linked by two disulfide bonds.

The protein localises to the secreted. Functionally, brain peptide responsible for activation of prothoracic glands to produce ecdysone in insects. The polypeptide is Bombyxin B-10 (BBXB10) (Bombyx mori (Silk moth)).